A 248-amino-acid polypeptide reads, in one-letter code: tRNA (guanine-N(1)-)-methyltransferase (248 aa).

S-adenosyl-L-methionine-binding positions include glycine 113 and 133–138 (IGDYVL).

Belongs to the RNA methyltransferase TrmD family. In terms of assembly, homodimer.

Its subcellular location is the cytoplasm. The enzyme catalyses guanosine(37) in tRNA + S-adenosyl-L-methionine = N(1)-methylguanosine(37) in tRNA + S-adenosyl-L-homocysteine + H(+). Its function is as follows. Specifically methylates guanosine-37 in various tRNAs. This chain is tRNA (guanine-N(1)-)-methyltransferase, found in Shewanella woodyi (strain ATCC 51908 / MS32).